A 74-amino-acid chain; its full sequence is Brevinin-2CG1 (74 aa).

A signal peptide spans 1-22; the sequence is MFTMKKSMLVLFFLGTISLSLC. Residues 23 to 39 constitute a propeptide, removed in mature form; the sequence is EEERNADEDDGEMTEEV. An intrachain disulfide couples cysteine 68 to cysteine 74.

As to expression, expressed by the skin glands.

It localises to the secreted. In terms of biological role, antimicrobial peptide active against a variety of Gram-positive and some Gram-negative bacterial strains. Has antifungal activity against a slime mold isolate. Has hemolytic activity against human erythrocytes. This chain is Brevinin-2CG1, found in Amolops chunganensis (Chungan torrent frog).